A 966-amino-acid polypeptide reads, in one-letter code: Phosphoenolpyruvate carboxylase, housekeeping isozyme (966 aa).

Ser11 carries the phosphoserine modification. Residues His172 and Lys601 contribute to the active site.

It belongs to the PEPCase type 1 family. In terms of assembly, homotetramer. The cofactor is Mg(2+).

It localises to the cytoplasm. The catalysed reaction is oxaloacetate + phosphate = phosphoenolpyruvate + hydrogencarbonate. By light-reversible phosphorylation. Its function is as follows. Through the carboxylation of phosphoenolpyruvate (PEP) it forms oxaloacetate, a four-carbon dicarboxylic acid source for the tricarboxylic acid cycle. The chain is Phosphoenolpyruvate carboxylase, housekeeping isozyme from Saccharum hybrid (Sugarcane).